Here is a 124-residue protein sequence, read N- to C-terminus: uncharacterized protein (124 aa).

The next 3 membrane-spanning stretches (helical) occupy residues 14–34 (KAIV…YGWQ), 41–61 (FSYG…IIFY), and 85–105 (MVFI…AFFV).

The protein resides in the cell membrane. This is an uncharacterized protein from Haemophilus influenzae (strain ATCC 51907 / DSM 11121 / KW20 / Rd).